The sequence spans 243 residues: Adapter protein MecA (243 aa).

The interval 119–140 (NQVEDGQGIAHNPTKDTNDLDP) is disordered.

It belongs to the MecA family. In terms of assembly, homodimer.

Functionally, enables the recognition and targeting of unfolded and aggregated proteins to the ClpC protease or to other proteins involved in proteolysis. The sequence is that of Adapter protein MecA from Lactiplantibacillus plantarum (strain ATCC BAA-793 / NCIMB 8826 / WCFS1) (Lactobacillus plantarum).